Consider the following 604-residue polypeptide: Glutamyl-tRNA(Gln) amidotransferase subunit B, mitochondrial (604 aa).

Residues 1 to 48 (MIRQCLSRRGAYSRYRLAARGVELAEPFHHQSSRPQGRRNWSSSPRCS) constitute a mitochondrion transit peptide. The segment at 28-57 (FHHQSSRPQGRRNWSSSPRCSLDIRTDTPR) is disordered. Over residues 33–46 (SRPQGRRNWSSSPR) the composition is skewed to polar residues.

This sequence belongs to the GatB/GatE family. GatB subfamily. In terms of assembly, subunit of the heterotrimeric GatCAB amidotransferase (AdT) complex, composed of A, B and C subunits.

It localises to the mitochondrion. The catalysed reaction is L-glutamyl-tRNA(Gln) + L-glutamine + ATP + H2O = L-glutaminyl-tRNA(Gln) + L-glutamate + ADP + phosphate + H(+). Its function is as follows. Allows the formation of correctly charged Gln-tRNA(Gln) through the transamidation of misacylated Glu-tRNA(Gln) in the mitochondria. The reaction takes place in the presence of glutamine and ATP through an activated gamma-phospho-Glu-tRNA(Gln). This chain is Glutamyl-tRNA(Gln) amidotransferase subunit B, mitochondrial, found in Ajellomyces dermatitidis (strain ER-3 / ATCC MYA-2586) (Blastomyces dermatitidis).